An 823-amino-acid polypeptide reads, in one-letter code: Adhesion G protein-coupled receptor E2 (823 aa).

The N-terminal stretch at 1-23 is a signal peptide; sequence MGGRVFLVFLAFCVWLTLPGAET. The Extracellular segment spans residues 24–540; that stretch reads QDSRGCARWC…EEDPVLTVIT (517 aa). In terms of domain architecture, EGF-like 1 spans 25-66; the sequence is DSRGCARWCPQDSSCVNATACRCNPGFSSFSEIITTPMETCD. 15 cysteine pairs are disulfide-bonded: cysteine 29–cysteine 39, cysteine 33–cysteine 45, cysteine 47–cysteine 65, cysteine 71–cysteine 85, cysteine 79–cysteine 94, cysteine 96–cysteine 117, cysteine 123–cysteine 136, cysteine 130–cysteine 145, cysteine 147–cysteine 161, cysteine 167–cysteine 180, cysteine 174–cysteine 189, cysteine 191–cysteine 210, cysteine 216–cysteine 229, cysteine 223–cysteine 238, and cysteine 240–cysteine 259. Asparagine 41 is a glycosylation site (N-linked (GlcNAc...) asparagine). Residues 67–118 form the EGF-like 2; calcium-binding domain; it reads DINECATLSKVSCGKFSDCWNTEGSYDCVCSPGYEPVSGAKTFKNESENTCQ. A glycan (N-linked (GlcNAc...) asparagine) is linked at asparagine 111. Positions 119-162 constitute an EGF-like 3; calcium-binding domain; it reads DVDECQQNPRLCKSYGTCVNTLGSYTCQCLPGFKLKPEDPKLCT. One can recognise an EGF-like 4; calcium-binding domain in the interval 163 to 211; it reads DVNECTSGQNPCHSSTHCLNNVGSYQCRCRPGWQPIPGSPNGPNNTVCE. Asparagine 206 is a glycosylation site (N-linked (GlcNAc...) asparagine). The region spanning 212–260 is the EGF-like 5; calcium-binding domain; the sequence is DVDECSSGQHQCDSSTVCFNTVGSYSCRCRPGWKPRHGIPNNQKDTVCE. N-linked (GlcNAc...) asparagine glycans are attached at residues asparagine 298, asparagine 347, asparagine 354, asparagine 456, and asparagine 460. Residues 354 to 530 enclose the GAIN-B domain; the sequence is NFSYPAGTEL…AVLMAHYDVQ (177 aa). 2 disulfides stabilise this stretch: cysteine 482-cysteine 512 and cysteine 500-cysteine 514. A GPS region spans residues 482–530; it reads CVFWEHGQNGCGHWATTGCSTIGTRDTSTICRCTHLSSFAVLMAHYDVQ. The chain crosses the membrane as a helical span at residues 541-561; it reads YMGLSVSLLCLLLAALTFLLC. The Cytoplasmic portion of the chain corresponds to 562-569; it reads KAIQNTST. The chain crosses the membrane as a helical span at residues 570–590; the sequence is SLHLQLSLCLFLAHLLFLVAI. The Extracellular segment spans residues 591-605; that stretch reads DQTGHKVLCSIIAGT. A helical membrane pass occupies residues 606-626; it reads LHYLYLATLTWMLLEALYLFL. Residues 627–644 are Cytoplasmic-facing; the sequence is TARNLTVVNYSSINRFMK. A helical transmembrane segment spans residues 645 to 665; the sequence is KLMFPVGYGVPAVTVAISAAS. Residues 666-683 lie on the Extracellular side of the membrane; the sequence is RPHLYGTPSRCWLQPEKG. The helical transmembrane segment at 684–704 threads the bilayer; that stretch reads FIWGFLGPVCAIFSVNLVLFL. Residues 705–735 lie on the Cytoplasmic side of the membrane; that stretch reads VTLWILKNRLSSLNSEVSTLRNTRMLAFKAT. A helical membrane pass occupies residues 736-756; it reads AQLFILGCTWCLGILQVGPAA. Residues 757 to 760 lie on the Extracellular side of the membrane; the sequence is RVMA. The chain crosses the membrane as a helical span at residues 761-781; sequence YLFTIINSLQGVFIFLVYCLL. At 782 to 823 the chain is on the cytoplasmic side; it reads SQQVREQYGKWSKGIRKLKTESEMHTLSSSAKADTSKPSTVN.

It belongs to the G-protein coupled receptor 2 family. Adhesion G-protein coupled receptor (ADGR) subfamily. Forms a heterodimer, consisting of a large extracellular region non-covalently linked to a seven-transmembrane moiety. Interacts with chondroitin sulfate; the interaction with chondroitin sulfate is calcium-dependent. Interacts with CD55. In terms of processing, autoproteolytically cleaved into 2 subunits, an extracellular alpha subunit and a seven-transmembrane beta subunit. As to expression, expression is restricted to myeloid cells. Highest expression was found in peripheral blood leukocytes, followed by spleen and lymph nodes, with intermediate to low levels in thymus, bone marrow, fetal liver, placenta, and lung, and no expression in heart, brain, skeletal muscle, kidney, or pancreas. Expression is also detected in monocyte/macrophage and Jurkat cell lines but not in other cell lines tested. High expression in mast cells.

The protein localises to the cell membrane. It is found in the cell projection. It localises to the ruffle membrane. In terms of biological role, cell surface receptor that binds to the chondroitin sulfate moiety of glycosaminoglycan chains and promotes cell attachment. Promotes granulocyte chemotaxis, degranulation and adhesion. In macrophages, promotes the release of inflammatory cytokines, including IL8 and TNF. Signals probably through G-proteins. Is a regulator of mast cell degranulation. This chain is Adhesion G protein-coupled receptor E2, found in Homo sapiens (Human).